Here is a 210-residue protein sequence, read N- to C-terminus: 7-carboxy-7-deazaguanine synthase (210 aa).

Residues 12–14 (LQG) and Arg27 contribute to the substrate site. The Radical SAM core domain occupies 18–210 (QAGKAAVFCR…VQTHKYLGLP (193 aa)). [4Fe-4S] cluster is bound by residues Cys31, Cys46, and Cys49. Thr51 lines the Mg(2+) pocket. Thr90 serves as a coordination point for substrate. Residues Gly92, 133–135 (SPK), and 173–176 (QPMD) contribute to the S-adenosyl-L-methionine site. Pro210 serves as a coordination point for substrate.

This sequence belongs to the radical SAM superfamily. 7-carboxy-7-deazaguanine synthase family. As to quaternary structure, homodimer. Requires [4Fe-4S] cluster as cofactor. The cofactor is S-adenosyl-L-methionine. Mg(2+) serves as cofactor.

It carries out the reaction 6-carboxy-5,6,7,8-tetrahydropterin + H(+) = 7-carboxy-7-deazaguanine + NH4(+). The protein operates within purine metabolism; 7-cyano-7-deazaguanine biosynthesis. Its function is as follows. Catalyzes the complex heterocyclic radical-mediated conversion of 6-carboxy-5,6,7,8-tetrahydropterin (CPH4) to 7-carboxy-7-deazaguanine (CDG), a step common to the biosynthetic pathways of all 7-deazapurine-containing compounds. The polypeptide is 7-carboxy-7-deazaguanine synthase (Caulobacter vibrioides (strain ATCC 19089 / CIP 103742 / CB 15) (Caulobacter crescentus)).